The primary structure comprises 61 residues: Protein A40 homolog (61 aa).

At 1-11 the chain is on the cytoplasmic side; sequence MTMNKPKTNYA. The chain crosses the membrane as a helical; Signal-anchor for type II membrane protein span at residues 12-32; the sequence is GYACCVICGLIVGIIFTATLL. At 33–61 the chain is on the extracellular side; it reads KAVERKLIHTPLIDKTIKDAYIREDCPTD.

Belongs to the poxviridae A40 protein family.

The protein resides in the host membrane. The polypeptide is Protein A40 homolog (A45R) (Homo sapiens (Human)).